The chain runs to 266 residues: ATG8-interacting protein 2 (266 aa).

The AIM (Atg8-family-interacting motif) signature appears at 14-17 (WEVV). The helical transmembrane segment at 191–210 (TNTVWSICIAAAVMGIVILG) threads the bilayer. The AIM (Atg8-family-interacting motif) signature appears at 218–221 (WQIL).

As to quaternary structure, interacts with ATG8F.

It localises to the endoplasmic reticulum membrane. It is found in the membrane. Functionally, may be involved in salt stress-induced vesicle-to-vacuole trafficking pathway. Through its interaction with ATG8F, may enable delivery of the vesicle bodies to the vacuole by an autophagic pathway. Plays a role in seed germination in response to exogenous abscisic acid (ABA) treatment. This chain is ATG8-interacting protein 2, found in Arabidopsis thaliana (Mouse-ear cress).